The sequence spans 278 residues: Phosphatidylglycerol--prolipoprotein diacylglyceryl transferase (278 aa).

3 helical membrane-spanning segments follow: residues 21-41 (WYGI…QASV), 54-74 (IIFW…VIFQ), and 88-108 (IWQG…TGII). Arginine 136 contributes to the a 1,2-diacyl-sn-glycero-3-phospho-(1'-sn-glycerol) binding site. 3 helical membrane passes run 176 to 196 (QPTF…LILL), 202 to 222 (IGDT…FVEG), and 234 to 254 (IRIA…IMIV).

It belongs to the Lgt family.

Its subcellular location is the cell membrane. It carries out the reaction L-cysteinyl-[prolipoprotein] + a 1,2-diacyl-sn-glycero-3-phospho-(1'-sn-glycerol) = an S-1,2-diacyl-sn-glyceryl-L-cysteinyl-[prolipoprotein] + sn-glycerol 1-phosphate + H(+). Its pathway is protein modification; lipoprotein biosynthesis (diacylglyceryl transfer). Functionally, catalyzes the transfer of the diacylglyceryl group from phosphatidylglycerol to the sulfhydryl group of the N-terminal cysteine of a prolipoprotein, the first step in the formation of mature lipoproteins. This Staphylococcus saprophyticus subsp. saprophyticus (strain ATCC 15305 / DSM 20229 / NCIMB 8711 / NCTC 7292 / S-41) protein is Phosphatidylglycerol--prolipoprotein diacylglyceryl transferase.